A 242-amino-acid polypeptide reads, in one-letter code: Biosynthetic peptidoglycan transglycosylase (242 aa).

A helical transmembrane segment spans residues 21 to 41; the sequence is VALVVFWGGGIALFSVVPVPF.

The protein belongs to the glycosyltransferase 51 family.

It localises to the cell inner membrane. The catalysed reaction is [GlcNAc-(1-&gt;4)-Mur2Ac(oyl-L-Ala-gamma-D-Glu-L-Lys-D-Ala-D-Ala)](n)-di-trans,octa-cis-undecaprenyl diphosphate + beta-D-GlcNAc-(1-&gt;4)-Mur2Ac(oyl-L-Ala-gamma-D-Glu-L-Lys-D-Ala-D-Ala)-di-trans,octa-cis-undecaprenyl diphosphate = [GlcNAc-(1-&gt;4)-Mur2Ac(oyl-L-Ala-gamma-D-Glu-L-Lys-D-Ala-D-Ala)](n+1)-di-trans,octa-cis-undecaprenyl diphosphate + di-trans,octa-cis-undecaprenyl diphosphate + H(+). The protein operates within cell wall biogenesis; peptidoglycan biosynthesis. In terms of biological role, peptidoglycan polymerase that catalyzes glycan chain elongation from lipid-linked precursors. The sequence is that of Biosynthetic peptidoglycan transglycosylase from Salmonella arizonae (strain ATCC BAA-731 / CDC346-86 / RSK2980).